The primary structure comprises 248 residues: Large ribosomal subunit protein uL29m (248 aa).

2 disordered regions span residues 77 to 107 (VSKY…GFFG) and 223 to 248 (AYEP…PPSS).

The protein belongs to the universal ribosomal protein uL29 family. As to quaternary structure, component of the mitochondrial large ribosomal subunit. Mature mitochondrial ribosomes consist of a small (37S) and a large (54S) subunit. The 37S subunit contains at least 33 different proteins and 1 molecule of RNA (15S). The 54S subunit contains at least 45 different proteins and 1 molecule of RNA (21S).

It is found in the mitochondrion. This is Large ribosomal subunit protein uL29m (MRPL4) from Ajellomyces capsulatus (strain NAm1 / WU24) (Darling's disease fungus).